Here is a 100-residue protein sequence, read N- to C-terminus: uncharacterized protein (100 aa).

It belongs to the csb family.

This is an uncharacterized protein from Dictyostelium discoideum (Social amoeba).